The following is a 149-amino-acid chain: uncharacterized protein (149 aa).

This is an uncharacterized protein from Homo sapiens (Human).